Reading from the N-terminus, the 426-residue chain is Serine--tRNA ligase (426 aa).

233-235 serves as a coordination point for L-serine; sequence TAE. ATP is bound at residue 264–266; it reads RSE. Residue E287 participates in L-serine binding. Residue 351 to 354 coordinates ATP; it reads EISS. S387 serves as a coordination point for L-serine.

The protein belongs to the class-II aminoacyl-tRNA synthetase family. Type-1 seryl-tRNA synthetase subfamily. As to quaternary structure, homodimer. The tRNA molecule binds across the dimer.

The protein localises to the cytoplasm. The enzyme catalyses tRNA(Ser) + L-serine + ATP = L-seryl-tRNA(Ser) + AMP + diphosphate + H(+). It catalyses the reaction tRNA(Sec) + L-serine + ATP = L-seryl-tRNA(Sec) + AMP + diphosphate + H(+). The protein operates within aminoacyl-tRNA biosynthesis; selenocysteinyl-tRNA(Sec) biosynthesis; L-seryl-tRNA(Sec) from L-serine and tRNA(Sec): step 1/1. In terms of biological role, catalyzes the attachment of serine to tRNA(Ser). Is also able to aminoacylate tRNA(Sec) with serine, to form the misacylated tRNA L-seryl-tRNA(Sec), which will be further converted into selenocysteinyl-tRNA(Sec). This chain is Serine--tRNA ligase, found in Stutzerimonas stutzeri (strain A1501) (Pseudomonas stutzeri).